Here is a 258-residue protein sequence, read N- to C-terminus: Phosphate import ATP-binding protein PstB (258 aa).

An ABC transporter domain is found at 5-247 (LDLKGVNIYY…EKIFSNPTEK (243 aa)). 37 to 44 (GASGCGKT) contributes to the ATP binding site.

Belongs to the ABC transporter superfamily. Phosphate importer (TC 3.A.1.7) family. In terms of assembly, the complex is composed of two ATP-binding proteins (PstB), two transmembrane proteins (PstC and PstA) and a solute-binding protein (PstS).

The protein resides in the cell membrane. It carries out the reaction phosphate(out) + ATP + H2O = ADP + 2 phosphate(in) + H(+). In terms of biological role, part of the ABC transporter complex PstSACB involved in phosphate import. Responsible for energy coupling to the transport system. This is Phosphate import ATP-binding protein PstB from Mycobacterium leprae (strain TN).